Reading from the N-terminus, the 209-residue chain is MKATISITTIFLVVALAAPSLARPDNHVEDSVGRLLRPGQTYHIVPANPETGGGIFSNSEEICPLDIFQSNNPLDLGLPIKFKSELWFVKEMNSITIEFEAPNWFLCPKESKGWRVVYSEEFKKSLIISTGGSSNPSGFQIHRVDGGAYKIVYCTNISTTTCMNVGIFTDISGARRLALTSDEALLVKFQKAATPKADLKTKLRMFPFY.

The signal sequence occupies residues Met1 to Ala22. 2 cysteine pairs are disulfide-bonded: Cys63-Cys107 and Cys154-Cys162. N-linked (GlcNAc...) asparagine glycosylation occurs at Asn156.

It belongs to the protease inhibitor I3 (leguminous Kunitz-type inhibitor) family.

Functionally, exhibits Kunitz trypsin protease inhibitor activity. The sequence is that of Kunitz trypsin inhibitor 1 from Arabidopsis thaliana (Mouse-ear cress).